A 237-amino-acid chain; its full sequence is Neurogenin-1 (237 aa).

Residues 35-83 form a disordered region; the sequence is LQQAASASGPPAPARRGAPNISRASEVPGAQDDEQERRRRRGRTRVRSE. Over residues 38-53 the composition is skewed to low complexity; sequence AASASGPPAPARRGAP. Residues 92-144 enclose the bHLH domain; the sequence is SRRVKANDRERNRMHNLNAALDALRSVLPSFPDDTKLTKIETLRFAYNYIWAL. A disordered region spans residues 175–209; the sequence is GPPSPASDAESWGSGAAAASPLSDPSSPAASEDFT. Positions 180 to 207 are enriched in low complexity; that stretch reads ASDAESWGSGAAAASPLSDPSSPAASED.

In terms of assembly, efficient DNA binding requires dimerization with another bHLH protein. In terms of tissue distribution, expression restricted to the embryonic nervous system.

The protein resides in the nucleus. Acts as a transcriptional regulator. Involved in the initiation of neuronal differentiation. Activates transcription by binding to the E box (5'-CANNTG-3'). Associates with chromatin to enhancer regulatory elements in genes encoding key transcriptional regulators of neurogenesis. The chain is Neurogenin-1 (NEUROG1) from Homo sapiens (Human).